Here is a 63-residue protein sequence, read N- to C-terminus: Hyphancin-3E (63 aa).

The N-terminal stretch at 1-22 (MNFSRILFFVFTCFVALASVSG) is a signal peptide. Residues 23–26 (APEP) constitute a propeptide, removed by a dipeptidylpeptidase. Leu61 bears the Leucine amide mark.

It belongs to the cecropin family.

It is found in the secreted. Its function is as follows. Has antibacterial activity. This chain is Hyphancin-3E, found in Hyphantria cunea (Fall webworm moth).